A 564-amino-acid chain; its full sequence is Putative ABC transporter ATP-binding protein PBPRA2240 (564 aa).

2 ABC transporter domains span residues 3-244 (IEFS…GIRE) and 299-533 (LTVN…ANLT). ATP contacts are provided by residues 37-44 (GPSGSGKS) and 332-339 (GKNGSGKS).

The protein belongs to the ABC transporter superfamily.

The protein resides in the cell inner membrane. Probably part of an ABC transporter complex. Responsible for energy coupling to the transport system. This is Putative ABC transporter ATP-binding protein PBPRA2240 from Photobacterium profundum (strain SS9).